The following is a 127-amino-acid chain: Fluoride-specific ion channel FluC (127 aa).

Transmembrane regions (helical) follow at residues L3–G23, L38–A58, F67–L87, and I102–L122. 2 residues coordinate Na(+): G77 and T80.

Belongs to the fluoride channel Fluc/FEX (TC 1.A.43) family.

It is found in the cell inner membrane. The enzyme catalyses fluoride(in) = fluoride(out). With respect to regulation, na(+) is not transported, but it plays an essential structural role and its presence is essential for fluoride channel function. In terms of biological role, fluoride-specific ion channel. Important for reducing fluoride concentration in the cell, thus reducing its toxicity. The protein is Fluoride-specific ion channel FluC of Helicobacter acinonychis (strain Sheeba).